The sequence spans 88 residues: MAHKKAGGSSRNGRDSAGQRRGVKRYGGEFVRAGNILVRQLGTKFHPGKNVGLGRDYTLFAMIDGIVAFEYKDKTRQQISVYPIPAQE.

The segment at 1–24 is disordered; the sequence is MAHKKAGGSSRNGRDSAGQRRGVK.

This sequence belongs to the bacterial ribosomal protein bL27 family.

The protein is Large ribosomal subunit protein bL27 of Syntrophobacter fumaroxidans (strain DSM 10017 / MPOB).